The following is a 270-amino-acid chain: 5-deoxy-glucuronate isomerase (270 aa).

The protein belongs to the isomerase IolB family.

It carries out the reaction 5-deoxy-D-glucuronate = 5-dehydro-2-deoxy-D-gluconate. The protein operates within polyol metabolism; myo-inositol degradation into acetyl-CoA; acetyl-CoA from myo-inositol: step 4/7. Its function is as follows. Involved in the isomerization of 5-deoxy-glucuronate (5DG) to 5-dehydro-2-deoxy-D-gluconate (DKG or 2-deoxy-5-keto-D-gluconate). In Halalkalibacterium halodurans (strain ATCC BAA-125 / DSM 18197 / FERM 7344 / JCM 9153 / C-125) (Bacillus halodurans), this protein is 5-deoxy-glucuronate isomerase.